Reading from the N-terminus, the 329-residue chain is MEETAHELTVKQYVEQQRELEREAREVLPYSFDTCTYSMGYLKQPLYACLTCQKASGSLNAVCYSCSISCHADHDLVDLFNKRHFRCDCGTTRTHSIPCNLRKSVDECGSENDYNHNFEGRFCICDTVYNPETEEGTMFQCILCEDWFHEKCLQKTNKGIAIPDAETFEWLVCSECSEKYRDHLLNQKHESIAGTERAPLFLSENFRENLCPCESCISLRNLEMPMLVAEEPIYEPPEDSEDGISEMNEDPSESGEMIEQVISSTMNDVLRILDRLPRVQANESVYAYNRLKSELTDFLTPFARENRVVTKEDISNFFLERSRISKNLR.

The UBR-type zinc-finger motif lies at 33 to 104 (DTCTYSMGYL…HSIPCNLRKS (72 aa)). Residues 120–179 (GRFCICDTVYNPETEEGTMFQCILCEDWFHEKCLQKTNKGIAIPDAETFEWLVCSECSEK) form a PHD-type zinc finger.

It belongs to the UBR7 family.

Not known, interfere with mitotic chromosome segregation when overexpressed. The sequence is that of Protein mlo2 (mlo2) from Schizosaccharomyces pombe (strain 972 / ATCC 24843) (Fission yeast).